A 122-amino-acid chain; its full sequence is uncharacterized protein (122 aa).

The next 3 membrane-spanning stretches (helical) occupy residues 21-40 (VWSW…SIAI), 57-77 (YTHM…CICI), and 94-114 (LLFS…YCIY).

Its subcellular location is the membrane. This is an uncharacterized protein from Saccharomyces cerevisiae (strain ATCC 204508 / S288c) (Baker's yeast).